The following is a 646-amino-acid chain: Acetyl-coenzyme A synthetase (646 aa).

Residues 189–192, threonine 307, and asparagine 331 contribute to the CoA site; that span reads RGPK. Residues 383-385, 407-412, aspartate 496, and arginine 511 each bind ATP; these read GEP and DTWWQT. Residue serine 519 participates in CoA binding. Position 522 (arginine 522) interacts with ATP. 3 residues coordinate Mg(2+): valine 533, histidine 535, and valine 538. Residue arginine 580 participates in CoA binding. An N6-acetyllysine modification is found at lysine 605.

It belongs to the ATP-dependent AMP-binding enzyme family. It depends on Mg(2+) as a cofactor. Acetylated. Deacetylation by the SIR2-homolog deacetylase activates the enzyme.

It carries out the reaction acetate + ATP + CoA = acetyl-CoA + AMP + diphosphate. Functionally, catalyzes the conversion of acetate into acetyl-CoA (AcCoA), an essential intermediate at the junction of anabolic and catabolic pathways. AcsA undergoes a two-step reaction. In the first half reaction, AcsA combines acetate with ATP to form acetyl-adenylate (AcAMP) intermediate. In the second half reaction, it can then transfer the acetyl group from AcAMP to the sulfhydryl group of CoA, forming the product AcCoA. This is Acetyl-coenzyme A synthetase from Desulfatibacillum aliphaticivorans.